The sequence spans 384 residues: Putative RNA methyltransferase slr0064 (384 aa).

One can recognise a THUMP domain in the interval 53 to 164 (LLYRINLWSR…QNHCQLSLDS (112 aa)).

Belongs to the methyltransferase superfamily.

The sequence is that of Putative RNA methyltransferase slr0064 from Synechocystis sp. (strain ATCC 27184 / PCC 6803 / Kazusa).